The following is a 91-amino-acid chain: MKVQILFALMMVLVTLCLGQKMQRGVIEDVCNNCETNCQLIKDYYGRSFCQDSLCQDSYRFCTNLEFTMDKCKDENSNTHAGCVTALLSTS.

The first 21 residues, 1 to 21, serve as a signal peptide directing secretion; sequence MKVQILFALMMVLVTLCLGQK. The propeptide occupies 22–24; that stretch reads MQR.

Belongs to the teretoxin C (TC) superfamily. In terms of processing, contains 4 disulfide bonds. Expressed by the venom duct.

The protein resides in the secreted. This is Teretoxin Tan22.13 from Terebra anilis (Auger snail).